Here is a 101-residue protein sequence, read N- to C-terminus: MAITALPSADGQELTIQIQGRFDFGAHQDFRDAYERVAITPRRYVVDLRNATYLDSSALGMLLLLRDHAGGENAQISLANCSPEVRKILAISNFEQLFKIS.

One can recognise an STAS domain in the interval 14–101; that stretch reads LTIQIQGRFD…SNFEQLFKIS (88 aa).

Phosphorylated on a serine residue, possibly on Ser-56.

The protein resides in the secreted. The protein is STAS-domain containing protein PA14_20770 of Pseudomonas aeruginosa (strain UCBPP-PA14).